A 520-amino-acid chain; its full sequence is Putative lipase ATG15 (520 aa).

At 1–14 the chain is on the cytoplasmic side; that stretch reads MLHKSPSRKRFASP. A helical; Signal-anchor for type II membrane protein membrane pass occupies residues 15–35; sequence LHLGCILTLTVLCLIAYYFAL. Over 36–520 the chain is Lumenal; the sequence is PDYLSVGKSS…WLGFCTKYEL (485 aa). 3 N-linked (GlcNAc...) asparagine glycosylation sites follow: asparagine 173, asparagine 202, and asparagine 208. The active-site Charge relay system is serine 332.

It belongs to the AB hydrolase superfamily. Lipase family. As to quaternary structure, binds to both phosphatidylinositol (PI) and phosphatidylinositol 3,5-bisphosphate (PIP2).

The protein resides in the endosome. It localises to the multivesicular body membrane. It is found in the prevacuolar compartment membrane. The enzyme catalyses a triacylglycerol + H2O = a diacylglycerol + a fatty acid + H(+). Functionally, lipase which is essential for lysis of subvacuolar cytoplasm to vacuole targeted bodies and intravacuolar autophagic bodies. Involved in the lysis of intravacuolar multivesicular body (MVB) vesicles. The intravacuolar membrane disintegration by ATG15 is critical to life span extension. The sequence is that of Putative lipase ATG15 (ATG15) from Saccharomyces cerevisiae (strain YJM789) (Baker's yeast).